The following is a 1020-amino-acid chain: Mastermind-like protein 1 (1020 aa).

The required for interaction with NOTCH proteins stretch occupies residues M1–A97. The residue at position 45 (S45) is a Phosphoserine. Positions K67–Q76 are enriched in basic residues. The segment at K67–D191 is disordered. Over residues P77–L99 the composition is skewed to low complexity. Basic and acidic residues predominate over residues D100–L122. Positions S124–Q133 are enriched in polar residues. Residues S127, S310, S321, and S367 each carry the phosphoserine modification. 6 disordered regions span residues G335–T522, P575–A598, E663–F686, S725–A748, Q794–T866, and A888–L959. Polar residues predominate over residues D344 to N369. A compositionally biased stretch (low complexity) spans A373–A383. The span at E399–A410 shows a compositional bias: polar residues. Residues L419–A435 show a composition bias toward low complexity. The span at P491–S515 shows a compositional bias: polar residues. Residues P588 to A598 are compositionally biased toward low complexity. Over residues Q794–K818 the composition is skewed to polar residues. K827 carries the post-translational modification N6-acetyllysine. Positions M837–P864 are enriched in polar residues. The segment covering S911 to A920 has biased composition (low complexity). A Phosphoserine modification is found at S1019.

It belongs to the mastermind family. As to quaternary structure, interacts (via N-terminus) with NOTCH1, NOTCH2, NOTCH3 and NOTCH4 (via ankyrin repeat region). Interacts (via N-terminus) with p53 (via DNA-binding region). Forms a DNA-binding complex with Notch proteins and RBPSUH/RBP-J kappa/CBF1. Also binds CREBBP/CBP and CDK8. Forms a complex with PRAG1, NOTCH1 and MAML1, in a MAML1-dependent manner. As to expression, at E9.5, strongly expressed in the telencephalon, first branchial arch, forelimb buds and somites. By 10.5 dpc, continuously expressed in brain and spinal cord. Also expressed in first and second branchial arches and limb buds. By 11.5 dpc, expression in CNS is weak but increases in mesodermal tissues. At 14.5 dpc, detected in epithelial cells in trachea, esophagus and proximal and distal tubules of the developing lungs.

The protein localises to the nucleus speckle. Functionally, acts as a transcriptional coactivator for NOTCH proteins. Has been shown to amplify NOTCH-induced transcription of HES1. Enhances phosphorylation and proteolytic turnover of the NOTCH intracellular domain in the nucleus through interaction with CDK8. Binds to CREBBP/CBP which promotes nucleosome acetylation at NOTCH enhancers and activates transcription. Induces phosphorylation and localization of CREBBP to nuclear foci. Plays a role in hematopoietic development by regulating NOTCH-mediated lymphoid cell fate decisions. This chain is Mastermind-like protein 1, found in Mus musculus (Mouse).